The following is a 427-amino-acid chain: Enolase (427 aa).

Gln-162 serves as a coordination point for (2R)-2-phosphoglycerate. The Proton donor role is filled by Glu-204. Mg(2+) is bound by residues Asp-241, Glu-283, and Asp-310. (2R)-2-phosphoglycerate is bound by residues Lys-335, Arg-364, Ser-365, and Lys-386. The Proton acceptor role is filled by Lys-335.

Belongs to the enolase family. Mg(2+) serves as cofactor.

The protein resides in the cytoplasm. It is found in the secreted. Its subcellular location is the cell surface. The enzyme catalyses (2R)-2-phosphoglycerate = phosphoenolpyruvate + H2O. It functions in the pathway carbohydrate degradation; glycolysis; pyruvate from D-glyceraldehyde 3-phosphate: step 4/5. Functionally, catalyzes the reversible conversion of 2-phosphoglycerate (2-PG) into phosphoenolpyruvate (PEP). It is essential for the degradation of carbohydrates via glycolysis. This Mycolicibacterium smegmatis (strain ATCC 700084 / mc(2)155) (Mycobacterium smegmatis) protein is Enolase.